The chain runs to 651 residues: MFAARFDPTKVVREEPKIIPQKRAIPDDVESSDSDQDIEDGVEVGAVSKEQSGTDVTTTRAVDGKSESDSESESESESDSDDEMNFDMGGSSSSSDDDEVSSKDADVDDDGKHTSVLSRFKKTLSIQDKISALEEANTQDILEDGEAHDLAQIPQPAVVRDKKLQVKDISEMKNTAFRDTRKVHYDNSMTKSFEEYSDDLTPKLLNNIEKYFSKSTFPIQTAMLDQYLKLINFTLKTSKKNFTRRIGDILVNASTGSGKTLAYSIPIIQTLSSRTVNKLRVLIILPTKLLINQVFQTMSQLAEGTSLVITVSKLENSFNEEHKRLLKTEPDIFITTPGRLVDHLTNSSISLRNLKFLVLDEADRLLNQSFQNWIPEVMSKFKSDKFDQMPGSIIKMVFSATLTTNTEKLNDLQLYNPTLFATDSVKLYNLPPTLQEYQLQIPSAKSVYKPLYLLKLLEQLSGGKTLVFVRSNESSLKLEVLLKSLIKGHMTTLQIVVHSINSNNSKAENRRLVTDFTKESLPNQTNVLITTDLMSRGIDIENIANVINYDVPISSQQYVHRCGRTARANKDGKAYNMLVGKGEAQFWKDSIDEDISRDVSGCKPISYNDSYNKVHGDENARTSEPTRDLFTSIDSETSDKYNEILKNLTQK.

Residues 1-114 (MFAARFDPTK…ADVDDDGKHT (114 aa)) are disordered. A compositionally biased stretch (basic and acidic residues) spans 7-17 (DPTKVVREEPK). Residues 27–42 (DDVESSDSDQDIEDGV) show a composition bias toward acidic residues. The span at 49 to 60 (KEQSGTDVTTTR) shows a compositional bias: polar residues. The segment covering 69-85 (DSESESESESDSDDEMN) has biased composition (acidic residues). Positions 100–113 (VSSKDADVDDDGKH) are enriched in basic and acidic residues. Positions 216-224 (TFPIQTAML) match the Q motif motif. One can recognise a Helicase ATP-binding domain in the interval 240 to 420 (KNFTRRIGDI…DLQLYNPTLF (181 aa)). 253–260 (ASTGSGKT) contacts ATP. The short motif at 360–363 (DEAD) is the DEAD box element. The Helicase C-terminal domain maps to 452-611 (YLLKLLEQLS…CKPISYNDSY (160 aa)).

Belongs to the DEAD box helicase family. DDX51/DBP6 subfamily. In terms of assembly, associated with pre-ribosomal particles.

The protein resides in the nucleus. Its subcellular location is the nucleolus. The catalysed reaction is ATP + H2O = ADP + phosphate + H(+). Its function is as follows. ATP-binding RNA helicase involved in the biogenesis of 60S ribosomal subunits and is required for the normal formation of 25S and 5.8S rRNAs. In Candida glabrata (strain ATCC 2001 / BCRC 20586 / JCM 3761 / NBRC 0622 / NRRL Y-65 / CBS 138) (Yeast), this protein is ATP-dependent RNA helicase DBP6 (DBP6).